Here is a 657-residue protein sequence, read N- to C-terminus: tRNA uridine 5-carboxymethylaminomethyl modification enzyme MnmG (657 aa).

13–18 (GGGHAG) provides a ligand contact to FAD. Position 281 to 295 (281 to 295 (GPRYCPSVEDKINRF)) interacts with NAD(+).

This sequence belongs to the MnmG family. As to quaternary structure, homodimer. Heterotetramer of two MnmE and two MnmG subunits. Requires FAD as cofactor.

The protein resides in the cytoplasm. In terms of biological role, NAD-binding protein involved in the addition of a carboxymethylaminomethyl (cmnm) group at the wobble position (U34) of certain tRNAs, forming tRNA-cmnm(5)s(2)U34. The chain is tRNA uridine 5-carboxymethylaminomethyl modification enzyme MnmG from Acidovorax ebreus (strain TPSY) (Diaphorobacter sp. (strain TPSY)).